The primary structure comprises 43 residues: GCKKDRKPCSYHADCCNCCLSGICAPSTNWILPGCSTSSFFKI.

Disulfide bonds link C2–C16, C9–C19, C15–C24, and C18–C35. Position 8 is a 4-hydroxyproline (P8). P26 is subject to 4-hydroxyproline. Residue W30 is modified to 6'-bromotryptophan. F41 carries the D-phenylalanine modification.

It belongs to the conotoxin I1 superfamily. Expressed by the venom duct.

The protein resides in the secreted. Iota-conotoxins bind to voltage-gated sodium channels (Nav) and act as agonists by shifting the voltage-dependence of activation to more hyperpolarized levels. Produces general excitatory symptoms. The protein is Iota-conotoxin-like Fi11.6 of Conus figulinus (Fig cone).